Here is a 206-residue protein sequence, read N- to C-terminus: MQGVIRSFVSGGNVVKGSVLQHLRVINPAIQPSVFCSRSESTQPARMEESGFESTTISDVMKSKGKSADGSWLWCTTDDTVYDAVKSMTQHNVGALVVVKPGEQQALAGIITERDYLRKIIVQGRSSKSTKVGDIMTEENKLITVTPETKVLRAMQLMTDNRIRHIPVIKDKGMIGMVSIGDVVRAVVHEHREELQRLNAYIQGGY.

Residues 1–39 (MQGVIRSFVSGGNVVKGSVLQHLRVINPAIQPSVFCSRS) constitute a mitochondrion transit peptide. 2 CBS domains span residues 61 to 127 (MKSK…GRSS) and 136 to 194 (MTEE…HREE).

The protein resides in the mitochondrion. The protein is CBS domain-containing protein CBSX3, mitochondrial (CBSX3) of Arabidopsis thaliana (Mouse-ear cress).